A 490-amino-acid polypeptide reads, in one-letter code: Betaine aldehyde dehydrogenase (490 aa).

2 residues coordinate K(+): T26 and D93. Residue 150–152 (GAW) coordinates NAD(+). The active-site Charge relay system is K162. Residue 176–179 (KPSE) participates in NAD(+) binding. V180 is a K(+) binding site. Residue 230 to 233 (GVAT) coordinates NAD(+). K(+) is bound at residue L246. Catalysis depends on E252, which acts as the Proton acceptor. Positions 254, 286, and 387 each coordinate NAD(+). The active-site Nucleophile is the C286. A Cysteine sulfenic acid (-SOH) modification is found at C286. Residues K457 and G460 each coordinate K(+). The active-site Charge relay system is the E464.

It belongs to the aldehyde dehydrogenase family. In terms of assembly, dimer of dimers. The cofactor is K(+).

It carries out the reaction betaine aldehyde + NAD(+) + H2O = glycine betaine + NADH + 2 H(+). It functions in the pathway amine and polyamine biosynthesis; betaine biosynthesis via choline pathway; betaine from betaine aldehyde: step 1/1. Functionally, involved in the biosynthesis of the osmoprotectant glycine betaine. Catalyzes the irreversible oxidation of betaine aldehyde to the corresponding acid. The chain is Betaine aldehyde dehydrogenase from Stenotrophomonas maltophilia (strain K279a).